The primary structure comprises 266 residues: Hydroxyethylthiazole kinase (266 aa).

Met-43 is a binding site for substrate. Residues Arg-119 and Thr-166 each contribute to the ATP site. Gly-193 provides a ligand contact to substrate.

This sequence belongs to the Thz kinase family. It depends on Mg(2+) as a cofactor.

It catalyses the reaction 5-(2-hydroxyethyl)-4-methylthiazole + ATP = 4-methyl-5-(2-phosphooxyethyl)-thiazole + ADP + H(+). The protein operates within cofactor biosynthesis; thiamine diphosphate biosynthesis; 4-methyl-5-(2-phosphoethyl)-thiazole from 5-(2-hydroxyethyl)-4-methylthiazole: step 1/1. Its function is as follows. Catalyzes the phosphorylation of the hydroxyl group of 4-methyl-5-beta-hydroxyethylthiazole (THZ). The protein is Hydroxyethylthiazole kinase of Methanococcus maripaludis (strain C5 / ATCC BAA-1333).